The primary structure comprises 932 residues: Protein hir1 (932 aa).

WD repeat units follow at residues Gly16–Glu55, Thr72–Gly111, Gly132–Arg171, Ala174–Thr213, Pro222–Asn265, Gly268–Ser316, and Val320–Ser361. 2 stretches are compositionally biased toward polar residues: residues Ser405–Pro426 and Thr441–Gln453. 2 disordered regions span residues Ser405–Pro470 and Thr498–Gln520. Over residues Thr498–Thr507 the composition is skewed to low complexity.

The protein belongs to the WD repeat HIR1 family. In terms of assembly, interacts with his3 and slm9.

Its subcellular location is the cytoplasm. The protein localises to the nucleus. Probably required for replication-independent chromatin assembly. Required for transcriptional silencing in the outer repeat (otr) centromeric repeats and the Tf2 long terminal repeat retrotransposons. Repressor of histone gene transcription in G1 arrested cells. Required for repression of htb1 gene expression outside of S phase. The sequence is that of Protein hir1 (hip1) from Schizosaccharomyces pombe (strain 972 / ATCC 24843) (Fission yeast).